The sequence spans 482 residues: Interferon-induced protein with tetratricopeptide repeats 5 (482 aa).

TPR repeat units lie at residues 51–84 (LALY…IQQE), 94–127 (LVTW…CKKL), 138–173 (PETD…EPDN), 181–214 (AITV…NPDN), 249–282 (PYVL…TPTS), 338–371 (AFAY…ENIT), 376–410 (HQIH…KDRS), and 435–468 (VQSL…DPEN). The interval 254-260 (YAAKFYR) is interaction with the 5'-triphosphate group of PPP-RNA.

Belongs to the IFIT family. As to quaternary structure, monomer. Interacts with MAP3K7 and the components of the IKK core complex CHUK, IKBKB and IKBKG; the interaction synergizes the recruitment of IKK to MAP3K7 and enhances IKK phosphorylation.

The protein resides in the cell projection. The protein localises to the ruffle membrane. Functionally, interferon-induced RNA-binding protein involved in the human innate immune response. Has a broad and adaptable RNA structure recognition important for RNA recognition specificity in antiviral defense. Binds precursor and processed tRNAs as well as poly-U-tailed tRNA fragments. Specifically binds single-stranded RNA bearing a 5'-triphosphate group (PPP-RNA), thereby acting as a sensor of viral single-stranded RNAs. Single-stranded PPP-RNAs, which lack 2'-O-methylation of the 5' cap and bear a 5'-triphosphate group instead, are specific from viruses, providing a molecular signature to distinguish between self and non-self mRNAs by the host during viral infection. Directly binds PPP-RNA in a non-sequence-specific manner. Also recognizes and selectively binds AT-rich dsDNA. Additionally, as a mediator in innate immunity, positively regulates IKK-NFKB signaling by sinergizing the recruitment of IKK to MAP3K7. This is Interferon-induced protein with tetratricopeptide repeats 5 (IFIT5) from Homo sapiens (Human).